The primary structure comprises 479 residues: Ribosomal RNA small subunit methyltransferase F (479 aa).

Residues 125–131 (AAAPGSK), E149, D176, and D194 each bind S-adenosyl-L-methionine. The active-site Nucleophile is C247.

Belongs to the class I-like SAM-binding methyltransferase superfamily. RsmB/NOP family.

Its subcellular location is the cytoplasm. It carries out the reaction cytidine(1407) in 16S rRNA + S-adenosyl-L-methionine = 5-methylcytidine(1407) in 16S rRNA + S-adenosyl-L-homocysteine + H(+). Its function is as follows. Specifically methylates the cytosine at position 1407 (m5C1407) of 16S rRNA. The polypeptide is Ribosomal RNA small subunit methyltransferase F (Salmonella schwarzengrund (strain CVM19633)).